Here is a 290-residue protein sequence, read N- to C-terminus: PIH1 domain-containing protein 1 (290 aa).

Phosphoserine occurs at positions 12, 16, and 173.

The protein belongs to the PIH1 family. As to quaternary structure, component of the R2TP complex composed at least of RUVBL1, RUVBL2, RPAP3 and PIHD1. Component of the PAQosome complex which is responsible for the biogenesis of several protein complexes and which consists of R2TP complex members RUVBL1, RUVBL2, RPAP3 and PIH1D1, URI complex members PFDN2, PFDN6, PDRG1, UXT and URI1 as well as ASDURF, POLR2E and DNAAF10/WDR92. Interacts with phosphorylated TELO2 and mediates interaction of TELO2 with the R2TP complex. Interacts with phosphorylated ECD, EFTUD2/SNRP116, RPB1 and UBR5 and with RPB1 in a phosphorylation-independent manner. Interacts with the core C/D box snoRNP particle components NOP58 and FBL and with RUVBL1/TIP49. Interacts with RPAP3 and DNAAF10. Interacts with histone H4 and with SWI/SNF complex member SMARCB1/SNF5. Interacts with the mTORC1 complex member RPTOR. Interacts with MSL1.

The protein resides in the nucleus. In terms of biological role, involved in the assembly of C/D box small nucleolar ribonucleoprotein (snoRNP) particles. Recruits the SWI/SNF complex to the core promoter of rRNA genes and enhances pre-rRNA transcription. Mediates interaction of TELO2 with the R2TP complex which is necessary for the stability of MTOR and SMG1. Positively regulates the assembly and activity of the mTORC1 complex. The chain is PIH1 domain-containing protein 1 (Pih1d1) from Rattus norvegicus (Rat).